The following is a 1077-amino-acid chain: RNA polymerase-associated protein CTR9 (1077 aa).

16 TPR repeats span residues 56 to 89, 138 to 174, 183 to 216, 218 to 251, 298 to 332, 338 to 371, 373 to 405, 421 to 455, 462 to 495, 501 to 534, 540 to 572, 664 to 697, 699 to 731, 732 to 764, 768 to 801, and 830 to 863; these read KEHWLTIALAYCNHGKTNEGIKLIEMALDVFQNS, IGNMLATVELYYQRGHYDKALETSDLFVKSIHAEDHR, CLFLLLRAKLLYQKKNYMASLKIFQELLVINPVL, PDPRIGIGLCFWQLKDSKMAIKSWQRALQLNPKN, PVLLTLLQTYYYFKGDYQTVLDIYHHRILKMSPMI, SESSFWCGRAHYALGDYRKSFIMFQESLKKNEDN, LAKLGLGQTQIKNNLLEESIITFENLYKTNESL, FDAKTAKNTSAKEQSNLNEKALKYLERYLKLTLAT, SRAYLVISQLYELQNQYKTSLDYLSKALEEMEFI, LEVLNNLACYHFINGDFIKADDLFKQAKAKVSDK, ITLEYNIARTNEKNDCEKSESIYSQVTSLHPAY, GKKSRNPKEQEKSKHSYLKAIQLYQKVLQVDPFN, FAAQGLAIIFAESKRLGPALEILRKVRDSLDNE, DVQLNLAHCYLEMREYGKAIENYELVLKKFDNE, PHILNLLGRAWYARAIKERSVNFYQKALENAKTA, and AETLRRSNPKFRTVQQIKDSLEGLKEGLELFREL. Positions 959 to 980 are enriched in basic and acidic residues; the sequence is EREAMAISEHNVKDDSDLSDKD. The tract at residues 959–1077 is disordered; sequence EREAMAISEH…NDNDDNDGLF (119 aa). Phosphoserine is present on residues Ser-1015 and Ser-1017. Composition is skewed to acidic residues over residues 1042–1051 and 1063–1077; these read FIEDSDEEEA and DNDENNDNDDNDGLF.

In terms of assembly, component of the PAF1 complex which consists of at least CDC73, CTR9, LEO1, PAF1 and RTF1. Interacts with SPT6. Interacts with FACT subunits POB3 and SPT16.

It localises to the nucleus. Its subcellular location is the nucleoplasm. The PAF1 complex is a multifunctional complex. Involved in transcription initiation via genetic interactions with TATA-binding proteins. Involved in elongation. It regulates 3'-end formation of snR47 by modulating the recruitment or stable association of NRD1 and NAB3 with RNA polymerase II. Also has a role in transcription-coupled histone modification. Required for activation of RAD6 ubiquitin conjugate and the BRE1 ubiquitin ligase which ubiquitinate 'Lys-126' histone H2B. Activates the SET1 histone methyltransferase complex for methylation of 'Lys-4' of histone H3 and for methylation of 'Lys-73' of histone H3 by DOT1 and 'Lys-36' of histone H3 by SET2. In complex with PAF1, required for normal CLN1 and CLN2 G1 cyclin expression in late G1. Also has a role in chromosome segregation where it appears to be involved in microtubule placement. This Saccharomyces cerevisiae (strain ATCC 204508 / S288c) (Baker's yeast) protein is RNA polymerase-associated protein CTR9 (CTR9).